A 156-amino-acid polypeptide reads, in one-letter code: Putative HTH-type transcriptional regulator YffB (156 aa).

The HTH rrf2-type domain occupies 2–137; the sequence is KLSSGWEQSV…SNVSLAQVAD (136 aa).

The protein is Putative HTH-type transcriptional regulator YffB (yffB) of Lactococcus lactis subsp. lactis (strain IL1403) (Streptococcus lactis).